Here is a 119-residue protein sequence, read N- to C-terminus: Ribonuclease P protein component (119 aa).

This sequence belongs to the RnpA family. In terms of assembly, consists of a catalytic RNA component (M1 or rnpB) and a protein subunit.

The catalysed reaction is Endonucleolytic cleavage of RNA, removing 5'-extranucleotides from tRNA precursor.. Its function is as follows. RNaseP catalyzes the removal of the 5'-leader sequence from pre-tRNA to produce the mature 5'-terminus. It can also cleave other RNA substrates such as 4.5S RNA. The protein component plays an auxiliary but essential role in vivo by binding to the 5'-leader sequence and broadening the substrate specificity of the ribozyme. This chain is Ribonuclease P protein component, found in Listeria innocua serovar 6a (strain ATCC BAA-680 / CLIP 11262).